An 87-amino-acid polypeptide reads, in one-letter code: Toxin Cll4 (87 aa).

The signal sequence occupies residues 1–19 (MNSLLMITACLALIGTVWA). An LCN-type CS-alpha/beta domain is found at 20-85 (KEGYIVNYHD…VWPLPKKRCN (66 aa)). 4 disulfide bridges follow: Cys-31–Cys-84, Cys-35–Cys-60, Cys-44–Cys-65, and Cys-48–Cys-67. Asparagine amide is present on Asn-85.

Belongs to the long (4 C-C) scorpion toxin superfamily. Sodium channel inhibitor family. Beta subfamily. In terms of tissue distribution, expressed by the venom gland.

It localises to the secreted. Beta toxins bind voltage-independently at site-4 of sodium channels (Nav) and shift the voltage of activation toward more negative potentials thereby affecting sodium channel activation and promoting spontaneous and repetitive firing. This Centruroides limpidus (Mexican scorpion) protein is Toxin Cll4.